We begin with the raw amino-acid sequence, 122 residues long: Large ribosomal subunit protein uL18 (122 aa).

Residues 1-16 (MFKKVDRKASRQKKQM) are compositionally biased toward basic residues. A disordered region spans residues 1-29 (MFKKVDRKASRQKKQMSIRNKISGTPERP).

Belongs to the universal ribosomal protein uL18 family. Part of the 50S ribosomal subunit; part of the 5S rRNA/L5/L18/L25 subcomplex. Contacts the 5S and 23S rRNAs.

In terms of biological role, this is one of the proteins that bind and probably mediate the attachment of the 5S RNA into the large ribosomal subunit, where it forms part of the central protuberance. In Fusobacterium nucleatum subsp. nucleatum (strain ATCC 25586 / DSM 15643 / BCRC 10681 / CIP 101130 / JCM 8532 / KCTC 2640 / LMG 13131 / VPI 4355), this protein is Large ribosomal subunit protein uL18.